A 501-amino-acid polypeptide reads, in one-letter code: Prostacyclin synthase (501 aa).

The helical transmembrane segment at 1-21 threads the bilayer; the sequence is MSWAALLGLLAVLLLLLLLLS. Residues arginine 107, leucine 113, asparagine 288, 359–360, and arginine 383 contribute to the substrate site; that span reads TR. Cysteine 442 is a heme binding site.

Belongs to the cytochrome P450 family. It depends on heme as a cofactor.

It localises to the endoplasmic reticulum membrane. It carries out the reaction prostaglandin H2 = prostaglandin I2. The catalysed reaction is a hydroperoxyeicosatetraenoate = an oxoeicosatetraenoate + H2O. The enzyme catalyses (15S)-hydroperoxy-(5Z,8Z,11Z,13E)-eicosatetraenoate = 15-oxo-(5Z,8Z,11Z,13E)-eicosatetraenoate + H2O. It catalyses the reaction (15S)-hydroperoxy-(5Z,8Z,11Z,13E)-eicosatetraenoate + AH2 = (15S)-hydroxy-(5Z,8Z,11Z,13E)-eicosatetraenoate + A + H2O. Catalyzes the biosynthesis and metabolism of eicosanoids. Catalyzes the isomerization of prostaglandin H2 to prostacyclin (= prostaglandin I2), a potent mediator of vasodilation and inhibitor of platelet aggregation. Additionally, displays dehydratase activity, toward hydroperoxyeicosatetraenoates (HPETEs), especially toward (15S)-hydroperoxy-(5Z,8Z,11Z,13E)-eicosatetraenoate (15(S)-HPETE). The sequence is that of Prostacyclin synthase (Ptgis) from Rattus norvegicus (Rat).